The chain runs to 365 residues: NADH-quinone oxidoreductase subunit H (365 aa).

8 helical membrane-spanning segments follow: residues 27 to 47 (LLLILAIIIPLLLAVAYLTFA), 99 to 119 (FLFLLAPILAITPALAAWAVV), 133 to 153 (ALLYILAMTSLGVYGVIIAGW), 168 to 188 (AAQVISYELAMGFALVCVLMM), 206 to 226 (FLNWYMIPLFPMFLVYFISGV), 268 to 288 (ILVATLASIMFLGGWLPPVDI), 294 to 314 (IPGVVWLLLKIAIMLFFFLWF), and 329 to 349 (LGWKVFIPITLIWIVLLGAVM).

The protein belongs to the complex I subunit 1 family. NDH-1 is composed of 14 different subunits. Subunits NuoA, H, J, K, L, M, N constitute the membrane sector of the complex.

The protein resides in the cell inner membrane. It carries out the reaction a quinone + NADH + 5 H(+)(in) = a quinol + NAD(+) + 4 H(+)(out). Its function is as follows. NDH-1 shuttles electrons from NADH, via FMN and iron-sulfur (Fe-S) centers, to quinones in the respiratory chain. The immediate electron acceptor for the enzyme in this species is believed to be ubiquinone. Couples the redox reaction to proton translocation (for every two electrons transferred, four hydrogen ions are translocated across the cytoplasmic membrane), and thus conserves the redox energy in a proton gradient. This subunit may bind ubiquinone. This chain is NADH-quinone oxidoreductase subunit H, found in Nitrosomonas eutropha (strain DSM 101675 / C91 / Nm57).